A 265-amino-acid chain; its full sequence is Undecaprenyl-diphosphatase (265 aa).

The next 7 membrane-spanning stretches (helical) occupy residues 42–62 (AATF…VLYW), 82–102 (GIML…AAHS), 108–128 (LFTP…MLLV), 143–163 (MSPA…WPGF), 181–201 (GLAA…ATGY), 221–241 (GFVV…ALVG), and 248–264 (FAWY…YFMA).

This sequence belongs to the UppP family.

The protein localises to the cell inner membrane. It carries out the reaction di-trans,octa-cis-undecaprenyl diphosphate + H2O = di-trans,octa-cis-undecaprenyl phosphate + phosphate + H(+). Its function is as follows. Catalyzes the dephosphorylation of undecaprenyl diphosphate (UPP). Confers resistance to bacitracin. In Nitratidesulfovibrio vulgaris (strain DP4) (Desulfovibrio vulgaris), this protein is Undecaprenyl-diphosphatase.